A 61-amino-acid polypeptide reads, in one-letter code: Small ribosomal subunit protein uS14 (61 aa).

Cys-24, Cys-27, Cys-40, and Cys-43 together coordinate Zn(2+).

This sequence belongs to the universal ribosomal protein uS14 family. Zinc-binding uS14 subfamily. As to quaternary structure, part of the 30S ribosomal subunit. Contacts proteins S3 and S10. Zn(2+) is required as a cofactor.

Its function is as follows. Binds 16S rRNA, required for the assembly of 30S particles and may also be responsible for determining the conformation of the 16S rRNA at the A site. The protein is Small ribosomal subunit protein uS14 of Frankia casuarinae (strain DSM 45818 / CECT 9043 / HFP020203 / CcI3).